A 368-amino-acid polypeptide reads, in one-letter code: DNA-directed RNA polymerase subunit alpha (368 aa).

The interval 1–231 is alpha N-terminal domain (alpha-NTD); it reads MLWKGFQKPK…DHMNIFINFE (231 aa). Residues 243-368 form an alpha C-terminal domain (alpha-CTD) region; it reads KPEIRNENLN…GFGGDNNPGF (126 aa).

This sequence belongs to the RNA polymerase alpha chain family. In terms of assembly, homodimer. The RNAP catalytic core consists of 2 alpha, 1 beta, 1 beta' and 1 omega subunit. When a sigma factor is associated with the core the holoenzyme is formed, which can initiate transcription.

It carries out the reaction RNA(n) + a ribonucleoside 5'-triphosphate = RNA(n+1) + diphosphate. Its function is as follows. DNA-dependent RNA polymerase catalyzes the transcription of DNA into RNA using the four ribonucleoside triphosphates as substrates. The protein is DNA-directed RNA polymerase subunit alpha of Koribacter versatilis (strain Ellin345).